Here is a 487-residue protein sequence, read N- to C-terminus: MVPVIALVGRPNVGKSTMFNRLTKTRDAIVGDLSGLTRDRQYGDATWQGRSFILIDTGGITGDEVGMDEKMAEQSLMAIEEADYVLFLVDARAGMTAADQMIAEHLRKRNKSAILVANKIDNIDPDVARAEFSPMGMGNAIPVAGSQGRGINALMEAVLGHLPRDAEDEALDQEVAEGEEAVRIPGPSEKDGIKIAIIGRPNVGKSTLVNRMLGEERVVVYDEPGTTRDSIYIPFERDGEKYTFIDTAGVRKRGKIHEEVEKFSVVKTLQAIKDANVVIFVMDAREGVVDHDLNLLGFALEAGRAIVIALNKWDGMEPGERAYVKTELERRLFFVDFADIHFISALHGTGVGNLYKSVQAAFKSAVTRWPTSRLTQILEDAVSEHQPPLVNGRRIKLRYAHLGGANPPLIVIHGNQTESIPKSYSRYLENTYRRVLKLVGTPIRIEYKGGENPFEGKKNTLTDRQVNKKRRLMSHHKKAEKKRRDKR.

2 consecutive EngA-type G domains span residues 3–166 (PVIA…PRDA) and 193–366 (IKIA…KSAV). GTP-binding positions include 9–16 (GRPNVGKS), 56–60 (DTGGI), 118–121 (NKID), 199–206 (GRPNVGKS), 246–250 (DTAGV), and 311–314 (NKWD). The region spanning 367–451 (TRWPTSRLTQ…PIRIEYKGGE (85 aa)) is the KH-like domain. The segment covering 449–461 (GGENPFEGKKNTL) has biased composition (basic and acidic residues). The segment at 449–487 (GGENPFEGKKNTLTDRQVNKKRRLMSHHKKAEKKRRDKR) is disordered. The segment covering 467 to 487 (NKKRRLMSHHKKAEKKRRDKR) has biased composition (basic residues).

The protein belongs to the TRAFAC class TrmE-Era-EngA-EngB-Septin-like GTPase superfamily. EngA (Der) GTPase family. Associates with the 50S ribosomal subunit.

GTPase that plays an essential role in the late steps of ribosome biogenesis. This is GTPase Der from Pseudomonas putida (strain GB-1).